The primary structure comprises 702 residues: Ribosomal RNA large subunit methyltransferase K/L (702 aa).

Positions 43-154 constitute a THUMP domain; the sequence is LIYQSLMWSR…KETASIALDL (112 aa).

Belongs to the methyltransferase superfamily. RlmKL family.

It localises to the cytoplasm. The enzyme catalyses guanosine(2445) in 23S rRNA + S-adenosyl-L-methionine = N(2)-methylguanosine(2445) in 23S rRNA + S-adenosyl-L-homocysteine + H(+). The catalysed reaction is guanosine(2069) in 23S rRNA + S-adenosyl-L-methionine = N(2)-methylguanosine(2069) in 23S rRNA + S-adenosyl-L-homocysteine + H(+). In terms of biological role, specifically methylates the guanine in position 2445 (m2G2445) and the guanine in position 2069 (m7G2069) of 23S rRNA. The sequence is that of Ribosomal RNA large subunit methyltransferase K/L from Salmonella choleraesuis (strain SC-B67).